We begin with the raw amino-acid sequence, 605 residues long: UvrABC system protein C (605 aa).

The region spanning 13–92 is the GIY-YIG domain; sequence SEPGVYLMKD…IKRYRPKYNV (80 aa). Positions 205-240 constitute a UVR domain; that stretch reads EKLMELLKEKMNESSMNFRFEEAAVYRDKIKSLEEM.

Belongs to the UvrC family. In terms of assembly, interacts with UvrB in an incision complex.

It is found in the cytoplasm. The UvrABC repair system catalyzes the recognition and processing of DNA lesions. UvrC both incises the 5' and 3' sides of the lesion. The N-terminal half is responsible for the 3' incision and the C-terminal half is responsible for the 5' incision. This chain is UvrABC system protein C, found in Clostridioides difficile (strain 630) (Peptoclostridium difficile).